The chain runs to 310 residues: MNLLRMNALTSKARSIERLKQTLNILSIRNHRQFSTIQQGSKYTLGFKKYLTLLNGEVGSFFHDVPLDLNEHEKTVNMIVEVPRWTTGKFEISKELRFNPIVQDTKNGKLRFVNNIFPYHGYIHNYGAIPQTWEDPTIEHKLGKCDVALKGDNDPLDCCEIGSDVLEMGSIKKVKVLGSLALIDDGELDWKVIVIDVNDPLSSKIDDLEKIEEYFPGILDTTREWFRKYKVPAGKPLNSFAFHEQYQNSNKTIQTIKKCHNSWKNLISGSLQEKYDNLPNTERAGNGVTLEDSVKPPSQIPPEVQKWYYV.

A mitochondrion-targeting transit peptide spans 1 to 30 (MNLLRMNALTSKARSIERLKQTLNILSIRN). D152, D157, and D189 together coordinate Mg(2+).

It belongs to the PPase family. As to quaternary structure, homodimer that binds non-covalently to a protein complex in the inner mitochondrial membrane. The cofactor is Mg(2+).

Its subcellular location is the mitochondrion. It catalyses the reaction diphosphate + H2O = 2 phosphate + H(+). Involved in energy production. Its activity is stimulated by uncouplers of ATP synthesis. The chain is Inorganic pyrophosphatase, mitochondrial (PPA2) from Saccharomyces cerevisiae (strain ATCC 204508 / S288c) (Baker's yeast).